The primary structure comprises 203 residues: E3 ubiquitin-protein ligase RNF152 (203 aa).

Residues 12 to 55 (CQICFNYYSPRRRPKLLDCKHTCCSVCLQQMRTSQKDVRCPWCR) form an RING-type zinc finger. Positions 106–165 (ISKERALLPGDMGCRLLPGSQQKSVTVVTVPAEQRPLQGGAPQEAVEEEPDRRGVAKSST) are necessary for interaction with RRAGA. Residues 167–187 (SGVCTVILVACVLVFLLGIVL) traverse the membrane as a helical segment.

This sequence belongs to the RNF152 family. As to quaternary structure, interacts with RRAGA (inactive GDP-bound form); stimulated by amino acid starvation. Post-translationally, ubiquitinated. Autoubiquitinated in vitro, leading to its degradation by the proteasome.

It is found in the lysosome membrane. The catalysed reaction is S-ubiquitinyl-[E2 ubiquitin-conjugating enzyme]-L-cysteine + [acceptor protein]-L-lysine = [E2 ubiquitin-conjugating enzyme]-L-cysteine + N(6)-ubiquitinyl-[acceptor protein]-L-lysine.. It functions in the pathway protein modification; protein ubiquitination. In terms of biological role, E3 ubiquitin-protein ligase that acts as a negative regulator of mTORC1 signaling by mediating ubiquitination of RagA/RRAGA and RHEB. Catalyzes 'Lys-63'-linked polyubiquitination of RagA/RRAGA in response to amino acid starvation, thereby regulating mTORC1 signaling. Also mediates monoubiquitination of RHEB, promoting its association with the TSC-TBC complex and subsequent inhibition. Also mediates 'Lys-48'-linked polyubiquitination of target proteins and their subsequent targeting to the proteasome for degradation. Induces apoptosis when overexpressed. This is E3 ubiquitin-protein ligase RNF152 from Ailuropoda melanoleuca (Giant panda).